Here is a 186-residue protein sequence, read N- to C-terminus: ATP synthase subunit delta, chloroplastic (186 aa).

Belongs to the ATPase delta chain family. F-type ATPases have 2 components, F(1) - the catalytic core - and F(0) - the membrane proton channel. F(1) has five subunits: alpha(3), beta(3), gamma(1), delta(1), epsilon(1). CF(0) has four main subunits: a(1), b(1), b'(1) and c(10-14). The alpha and beta chains form an alternating ring which encloses part of the gamma chain. F(1) is attached to F(0) by a central stalk formed by the gamma and epsilon chains, while a peripheral stalk is formed by the delta, b and b' chains.

The protein resides in the plastid. Its subcellular location is the chloroplast thylakoid membrane. Its function is as follows. F(1)F(0) ATP synthase produces ATP from ADP in the presence of a proton or sodium gradient. F-type ATPases consist of two structural domains, F(1) containing the extramembraneous catalytic core and F(0) containing the membrane proton channel, linked together by a central stalk and a peripheral stalk. During catalysis, ATP synthesis in the catalytic domain of F(1) is coupled via a rotary mechanism of the central stalk subunits to proton translocation. Functionally, this protein is part of the stalk that links CF(0) to CF(1). It either transmits conformational changes from CF(0) to CF(1) or is implicated in proton conduction. In Porphyra purpurea (Red seaweed), this protein is ATP synthase subunit delta, chloroplastic.